The sequence spans 1613 residues: NAD-specific glutamate dehydrogenase (1613 aa).

Residue lysine 849 is part of the active site.

Belongs to the Glu/Leu/Phe/Val dehydrogenases family.

It catalyses the reaction L-glutamate + NAD(+) + H2O = 2-oxoglutarate + NH4(+) + NADH + H(+). In terms of biological role, involved in arginine catabolism by converting L-glutamate, into 2-oxoglutarate, which is then channeled into the tricarboxylic acid cycle. In Halomonas elongata (strain ATCC 33173 / DSM 2581 / NBRC 15536 / NCIMB 2198 / 1H9), this protein is NAD-specific glutamate dehydrogenase.